A 498-amino-acid polypeptide reads, in one-letter code: tRNA-2-methylthio-N(6)-dimethylallyladenosine synthase (498 aa).

Residues 2–118 (PRYSITTFGC…LPGLLGDLAI (117 aa)) enclose the MTTase N-terminal domain. [4Fe-4S] cluster contacts are provided by Cys11, Cys47, Cys81, Cys163, Cys167, and Cys170. Positions 149 to 393 (PRAAPTAFVT…FEESEALLAA (245 aa)) constitute a Radical SAM core domain. The TRAM domain occupies 396–467 (SALVGTTQEV…KHSLQAELTE (72 aa)). The disordered stretch occupies residues 469–498 (ARAAARPRQRGGLEPRPARRSLPVVAAEGG).

Belongs to the methylthiotransferase family. MiaB subfamily. As to quaternary structure, monomer. The cofactor is [4Fe-4S] cluster.

Its subcellular location is the cytoplasm. The catalysed reaction is N(6)-dimethylallyladenosine(37) in tRNA + (sulfur carrier)-SH + AH2 + 2 S-adenosyl-L-methionine = 2-methylsulfanyl-N(6)-dimethylallyladenosine(37) in tRNA + (sulfur carrier)-H + 5'-deoxyadenosine + L-methionine + A + S-adenosyl-L-homocysteine + 2 H(+). Its function is as follows. Catalyzes the methylthiolation of N6-(dimethylallyl)adenosine (i(6)A), leading to the formation of 2-methylthio-N6-(dimethylallyl)adenosine (ms(2)i(6)A) at position 37 in tRNAs that read codons beginning with uridine. The protein is tRNA-2-methylthio-N(6)-dimethylallyladenosine synthase of Sorangium cellulosum (strain So ce56) (Polyangium cellulosum (strain So ce56)).